The chain runs to 360 residues: Phospho-N-acetylmuramoyl-pentapeptide-transferase (360 aa).

10 helical membrane-spanning segments follow: residues 26–46 (SIMA…KVIN), 73–93 (TMGG…WADL), 98–118 (VWFT…DDYW), 132–152 (WKYF…YAMG), 168–188 (VMPQ…VGTS), 199–219 (GLAI…AWAT), 236–256 (SGEL…FLWY), 263–283 (VFMG…IAVL), 288–308 (LLLL…ILQV), and 338–358 (VIVR…VTLK).

Belongs to the glycosyltransferase 4 family. MraY subfamily. Mg(2+) is required as a cofactor.

It is found in the cell inner membrane. It carries out the reaction UDP-N-acetyl-alpha-D-muramoyl-L-alanyl-gamma-D-glutamyl-meso-2,6-diaminopimeloyl-D-alanyl-D-alanine + di-trans,octa-cis-undecaprenyl phosphate = di-trans,octa-cis-undecaprenyl diphospho-N-acetyl-alpha-D-muramoyl-L-alanyl-D-glutamyl-meso-2,6-diaminopimeloyl-D-alanyl-D-alanine + UMP. Its pathway is cell wall biogenesis; peptidoglycan biosynthesis. Functionally, catalyzes the initial step of the lipid cycle reactions in the biosynthesis of the cell wall peptidoglycan: transfers peptidoglycan precursor phospho-MurNAc-pentapeptide from UDP-MurNAc-pentapeptide onto the lipid carrier undecaprenyl phosphate, yielding undecaprenyl-pyrophosphoryl-MurNAc-pentapeptide, known as lipid I. The sequence is that of Phospho-N-acetylmuramoyl-pentapeptide-transferase from Haemophilus ducreyi (strain 35000HP / ATCC 700724).